The chain runs to 382 residues: Type 2 DNA topoisomerase 6 subunit A (382 aa).

The Topo IIA-type catalytic domain occupies 14-155 (YDPQKVLKKL…MHITADRRGY (142 aa)). Tyr108 serves as the catalytic O-(5'-phospho-DNA)-tyrosine intermediate. Mg(2+) contacts are provided by Glu202 and Asp254.

The protein belongs to the TOP6A family. Homodimer. Heterotetramer of two Top6A and two Top6B chains. It depends on Mg(2+) as a cofactor.

The enzyme catalyses ATP-dependent breakage, passage and rejoining of double-stranded DNA.. Functionally, relaxes both positive and negative superturns and exhibits a strong decatenase activity. The chain is Type 2 DNA topoisomerase 6 subunit A from Pyrococcus horikoshii (strain ATCC 700860 / DSM 12428 / JCM 9974 / NBRC 100139 / OT-3).